A 157-amino-acid chain; its full sequence is Crossover junction endodeoxyribonuclease RuvC (157 aa).

Catalysis depends on residues aspartate 7, glutamate 67, and aspartate 140. Residues aspartate 7, glutamate 67, and aspartate 140 each coordinate Mg(2+).

This sequence belongs to the RuvC family. Homodimer which binds Holliday junction (HJ) DNA. The HJ becomes 2-fold symmetrical on binding to RuvC with unstacked arms; it has a different conformation from HJ DNA in complex with RuvA. In the full resolvosome a probable DNA-RuvA(4)-RuvB(12)-RuvC(2) complex forms which resolves the HJ. Mg(2+) is required as a cofactor.

The protein localises to the cytoplasm. The enzyme catalyses Endonucleolytic cleavage at a junction such as a reciprocal single-stranded crossover between two homologous DNA duplexes (Holliday junction).. The RuvA-RuvB-RuvC complex processes Holliday junction (HJ) DNA during genetic recombination and DNA repair. Endonuclease that resolves HJ intermediates. Cleaves cruciform DNA by making single-stranded nicks across the HJ at symmetrical positions within the homologous arms, yielding a 5'-phosphate and a 3'-hydroxyl group; requires a central core of homology in the junction. The consensus cleavage sequence is 5'-(A/T)TT(C/G)-3'. Cleavage occurs on the 3'-side of the TT dinucleotide at the point of strand exchange. HJ branch migration catalyzed by RuvA-RuvB allows RuvC to scan DNA until it finds its consensus sequence, where it cleaves and resolves the cruciform DNA. The sequence is that of Crossover junction endodeoxyribonuclease RuvC from Rickettsia akari (strain Hartford).